A 56-amino-acid chain; its full sequence is Male determiner protein Yob (56 aa).

Its function is as follows. Male determiner protein (M-factor) that controls male somatic sexual differentiation. Acts as a dominant factor that regulates the mRNA splicing of doublesex (dsx) transcripts and promotes expression of male splice forms of dsx. The sequence is that of Male determiner protein Yob from Anopheles gambiae (African malaria mosquito).